The primary structure comprises 192 residues: MSTIKSGDIDKGSFLLFKGMPHIVLEREFSKMGRGGSIVRLKLKNLKNKSVIKETLKGSDTVEEIEVLEVNSQYLYKDNESLIFMDLETYDQFSVNLRDVVNLEDKVLFLQEAEVYSLIKWGNEVIDLKLPPKVAFEVVDAEIAVKGDTVTNAMKNVTLHTDLVVKAPLFINIGDKILVNSETKEYAERVKV.

This sequence belongs to the elongation factor P family.

It is found in the cytoplasm. The protein operates within protein biosynthesis; polypeptide chain elongation. Involved in peptide bond synthesis. Stimulates efficient translation and peptide-bond synthesis on native or reconstituted 70S ribosomes in vitro. Probably functions indirectly by altering the affinity of the ribosome for aminoacyl-tRNA, thus increasing their reactivity as acceptors for peptidyl transferase. In Borrelia recurrentis (strain A1), this protein is Elongation factor P.